A 302-amino-acid chain; its full sequence is UDP-N-acetylenolpyruvoylglucosamine reductase (302 aa).

An FAD-binding PCMH-type domain is found at 32–195 (LGGPADLLAR…VTVTLELVPD (164 aa)). R175 is a catalytic residue. Residue S224 is the Proton donor of the active site. The active site involves E294.

It belongs to the MurB family. FAD serves as cofactor.

It is found in the cytoplasm. The catalysed reaction is UDP-N-acetyl-alpha-D-muramate + NADP(+) = UDP-N-acetyl-3-O-(1-carboxyvinyl)-alpha-D-glucosamine + NADPH + H(+). The protein operates within cell wall biogenesis; peptidoglycan biosynthesis. Functionally, cell wall formation. The polypeptide is UDP-N-acetylenolpyruvoylglucosamine reductase (Moorella thermoacetica (strain ATCC 39073 / JCM 9320)).